The chain runs to 640 residues: MAEAALVITPQIPMVTEEFVKPSQGHVTFEDIAVYFSQEEWGLLDEAQRCLYHDVMLENFSLMASVGCLHGIEAEEAPSEQTLSAQGVSQARTPKLGPSIPNAHSCEMCILVMKDILYLSEHQGTLPWQKPYTSVASGKWFSFGSNLQQHQNQDSGEKHIRKEESSALLLNSCKIPLSDNLFPCKDVEKDFPTILGLLQHQTTHSRQEYAHRSRETFQQRRYKCEQVFNEKVHVTEHQRVHTGEKAYKRREYGKSLNSKYLFVEHQRTHNAEKPYVCNICGKSFLHKQTLVGHQQRIHTRERSYVCIECGKSLSSKYSLVEHQRTHNGEKPYVCNVCGKSFRHKQTFVGHQQRIHTGERPYVCMECGKSFIHSYDRIRHQRVHTGEGAYQCSECGKSFIYKQSLLDHHRIHTGERPYECKECGKAFIHKKRLLEHQRIHTGEKPYVCIICGKSFIRSSDYMRHQRIHTGERAYECSDCGKAFISKQTLLKHHKIHTRERPYECSECGKGFYLEVKLLQHQRIHTREQLCECNECGKVFSHQKRLLEHQKVHTGEKPCECSECGKCFRHRTSLIQHQKVHSGERPYNCTACEKAFIYKNKLVEHQRIHTGEKPYECGKCGKAFNKRYSLVRHQKVHITEEP.

Positions 27–140 (VTFEDIAVYF…PYTSVASGKW (114 aa)) constitute a KRAB domain. The C2H2-type 1; degenerate zinc-finger motif lies at 217-241 (FQQRRYKCEQVFNEKVHVTEHQRVH). Residue Lys-223 forms a Glycyl lysine isopeptide (Lys-Gly) (interchain with G-Cter in SUMO2) linkage. The C2H2-type 2; degenerate zinc finger occupies 247–269 (YKRREYGKSLNSKYLFVEHQRTH). 13 C2H2-type zinc fingers span residues 275–298 (YVCN…QRIH), 304–326 (YVCI…QRTH), 332–355 (YVCN…QRIH), 361–383 (YVCM…QRVH), 389–411 (YQCS…HRIH), 417–439 (YECK…QRIH), 445–467 (YVCI…QRIH), 473–495 (YECS…HKIH), 501–523 (YECS…QRIH), 529–551 (CECN…QKVH), 557–579 (CECS…QKVH), 585–607 (YNCT…QRIH), and 613–635 (YECG…QKVH).

It belongs to the krueppel C2H2-type zinc-finger protein family.

The protein resides in the nucleus. Functionally, may be involved in transcriptional regulation. This is Zinc finger protein 549 (ZNF549) from Homo sapiens (Human).